Consider the following 357-residue polypeptide: Mannonate dehydratase (357 aa).

The protein belongs to the mannonate dehydratase family. Requires Fe(2+) as cofactor. Mn(2+) serves as cofactor.

The catalysed reaction is D-mannonate = 2-dehydro-3-deoxy-D-gluconate + H2O. The protein operates within carbohydrate metabolism; pentose and glucuronate interconversion. Catalyzes the dehydration of D-mannonate. In Enterococcus faecalis (strain ATCC 700802 / V583), this protein is Mannonate dehydratase.